Reading from the N-terminus, the 336-residue chain is N-((2S)-2-amino-2-carboxyethyl)-L-glutamate dehydrogenase (336 aa).

Lys-78 functions as the Proton donor/acceptor in the catalytic mechanism. NAD(+)-binding residues include Arg-122 and Lys-242.

This sequence belongs to the ornithine cyclodeaminase/mu-crystallin family. Homodimer.

The catalysed reaction is N-[(2S)-2-amino-2-carboxyethyl]-L-glutamate + NAD(+) + H2O = (S)-2,3-diaminopropanoate + 2-oxoglutarate + NADH + H(+). It functions in the pathway siderophore biosynthesis. In terms of biological role, catalyzes the hydrolysis of N-((2S)-2-amino-2-carboxyethyl)-L-glutamate (ACEGA) to form L-2,3-diaminopropionic acid and 2-oxoglutarate. Involved in the biosynthesis of L-2,3-diaminopropionic acid (L-Dap), a precursor of staphyloferrin B and antibiotics. This chain is N-((2S)-2-amino-2-carboxyethyl)-L-glutamate dehydrogenase, found in Staphylococcus aureus (strain NCTC 8325 / PS 47).